Consider the following 744-residue polypeptide: Probable methylmalonyl-CoA mutase, mitochondrial (744 aa).

The 133-residue stretch at 605 to 737 folds into the B12-binding domain; sequence QPRIMVAKMG…EKLEANLPEA (133 aa). Position 618 (histidine 618) interacts with adenosylcob(III)alamin.

The protein belongs to the methylmalonyl-CoA mutase family. As to quaternary structure, homodimer. It depends on adenosylcob(III)alamin as a cofactor.

Its subcellular location is the mitochondrion matrix. The enzyme catalyses (R)-methylmalonyl-CoA = succinyl-CoA. In terms of biological role, involved, in man, in the degradation of several amino acids, odd-chain fatty acids and cholesterol via propionyl-CoA to the tricarboxylic acid cycle. MCM has different functions in other species. In Caenorhabditis elegans, this protein is Probable methylmalonyl-CoA mutase, mitochondrial (mmcm-1).